The sequence spans 187 residues: Small ribosomal subunit protein uS4 (187 aa).

The region spanning 105–174 (RRLQTLVFRK…DNHPERAKIV (70 aa)) is the S4 RNA-binding domain.

It belongs to the universal ribosomal protein uS4 family. As to quaternary structure, part of the 30S ribosomal subunit. Contacts protein S5. The interaction surface between S4 and S5 is involved in control of translational fidelity.

One of the primary rRNA binding proteins, it binds directly to 16S rRNA where it nucleates assembly of the body of the 30S subunit. Its function is as follows. With S5 and S12 plays an important role in translational accuracy. In Methanocaldococcus jannaschii (strain ATCC 43067 / DSM 2661 / JAL-1 / JCM 10045 / NBRC 100440) (Methanococcus jannaschii), this protein is Small ribosomal subunit protein uS4.